Consider the following 431-residue polypeptide: MAQKIQSVKGMNDLLPVEQKDFKLTAAFWQAFEDTVGRWTRTYGYQQIRTPIVEQTGLFVRSIGEETDVVGKEMYTFSDSNDSLSLSLRPEGTASCLRAVVEHNFLYNSPQKLWYMGPMFRRERPQKGRYRQFHQVGIEALGFEGPDIDAEIIAMSADLWEKLGIREYLTLEINSLGNREERAAHRAALVEYLTRYEDKLDEDSKRRLKTNPLRVLDTKNPDLQEICNAAPRLVDYLGEASQNHYARFKAMLDGLGIQYIENPRLVRGLDYYNQTVFEWTTDKLGAQATVCGGGRYDGLIEELGGKPAPSIGFAMGIERLLLLVSEYGSLEVNAAPDVYAMHQGEGADLQVMKYAQALRAQGFNVMQHSGYQSLKAQMKKADNSGARFALIVAQDELANGTVTLKDMNGAHDQQTVAAADLTNTLQQWKNA.

Belongs to the class-II aminoacyl-tRNA synthetase family. In terms of assembly, homodimer.

It localises to the cytoplasm. It catalyses the reaction tRNA(His) + L-histidine + ATP = L-histidyl-tRNA(His) + AMP + diphosphate + H(+). This chain is Histidine--tRNA ligase, found in Neisseria meningitidis serogroup A / serotype 4A (strain DSM 15465 / Z2491).